Here is a 164-residue protein sequence, read N- to C-terminus: Proline-rich protein 2 (164 aa).

The N-terminal stretch at 1–21 is a signal peptide; sequence MNLKVGIAVLIIALIVPSAQP.

In terms of tissue distribution, component of the acid-soluble organic matrix of calcified layers of the shell (at protein level).

Its subcellular location is the secreted. This is Proline-rich protein 2 from Lottia gigantea (Giant owl limpet).